The primary structure comprises 412 residues: MKKVSVIAAAVAATLAAGSAFAVDFNGYFRAGTGISGNGNADQAVNKAGTGRLGNENDNYYEFGFAEELKTGEQTWKVESMIAQGNSGANGWEDGDFNVAQFNVQAKGLLASDQEAVMWAGKRYYQRKDIHITDFYFLNTSGTGGGIENLSVGNQKLSVALVQDGDNTNSSGYIFDARLANIGLWENASLELAMAYNFATEKDSKNEVADDGVLVSAILHQGLSNGFNQTVFQYGTAGYGAQAANFWGAGSYYARGTEAFNDASGFRLLNWGVINLGENWEMGHQLAYLAGSDIGGQFGGDGANKNTYTGKSFDIDQYSVVVRPMYKWNDTMRTVFEAGYNAGEKISNGGLATEDFGNAKFTVAQAWAMGDSFWARPELRVYGTYLLDTENDKAFGDDDTEFVVGIQVEAWW.

Positions 1-22 (MKKVSVIAAAVAATLAAGSAFA) are cleaved as a signal peptide.

This sequence belongs to the porin LamB (TC 1.B.3) family. Homotrimer formed of three 18-stranded antiparallel beta-barrels, containing three independent channels.

It is found in the cell outer membrane. It carries out the reaction beta-maltose(in) = beta-maltose(out). Functionally, involved in the transport of maltose and maltodextrins. In Vibrio cholerae serotype O1 (strain ATCC 39315 / El Tor Inaba N16961), this protein is Maltoporin.